The following is a 700-amino-acid chain: Stonustoxin subunit beta (700 aa).

A structural MACPF/CDC pore-forming domain region spans residues 2-264; that stretch reads PSDILVVAAL…EAPQLMADSS (263 aa). Residues 265 to 384 are structural FAT domain; that stretch reads TPILRKVRNT…DILTKAKPKV (120 aa). The segment at 385-514 is thioredoxin (THX) domain; sequence IFNQGVLFKG…PYMPGVESIK (130 aa). A B30.2/SPRY domain is found at 506–700; that stretch reads YMPGVESIKD…QKVNGQIKLL (195 aa).

It belongs to the SNTX/VTX toxin family. As to quaternary structure, heterodimer of alpha and beta subunits; non-covalently linked. In terms of processing, intrachain disulfide bonds may be present in the heterodimer. Not glycosylated. In terms of tissue distribution, expressed by the venom gland.

Its subcellular location is the secreted. This lethal (towards mammals) heterodimer induces hemolytic activities due to its ability to form pores in the cell membrane. The pore may be composed of 10 SNTX-alpha/beta heterodimers. The toxin elicits potent hypotension which is endothelium-dependent and appears to be mediated by the nitric oxide pathway and activation of potassium channels. In addition, it displays edema-inducing activities, increases vascular permeability. It also shows myotoxic activities and interferes irreversibly with neuromuscular function. It also induces irreversible platelet aggregation in rabbit or rat but not in human or mouse whole blood. In addition, it has been observed to increase spontaneous quantal acetylcholine release from isolated frog cutaneous pectoris motor endings. The chain is Stonustoxin subunit beta from Synanceia horrida (Estuarine stonefish).